The chain runs to 449 residues: Bifunctional protein GlmU (449 aa).

Residues 1-226 form a pyrophosphorylase region; that stretch reads MNNIHAIILA…KFEVLGVNDK (226 aa). UDP-N-acetyl-alpha-D-glucosamine-binding positions include 9–12, Lys-23, Gln-73, 78–79, 100–102, Gly-137, Glu-151, Asn-166, and Asn-224; these read LAAG, GT, and YGD. Position 102 (Asp-102) interacts with Mg(2+). Asn-224 is a binding site for Mg(2+). Positions 227–247 are linker; sequence VQLAELERLFQKDQAIQFMKQ. The interval 248 to 449 is N-acetyltransferase; the sequence is GLGLKDPTRF…QKNLKYRSKK (202 aa). UDP-N-acetyl-alpha-D-glucosamine is bound by residues Arg-330 and Lys-348. The Proton acceptor role is filled by His-360. Tyr-363 and Asn-374 together coordinate UDP-N-acetyl-alpha-D-glucosamine. Acetyl-CoA contacts are provided by residues Ala-377, 383–384, Ser-402, Ala-420, and Arg-437; that span reads NY.

It in the N-terminal section; belongs to the N-acetylglucosamine-1-phosphate uridyltransferase family. The protein in the C-terminal section; belongs to the transferase hexapeptide repeat family. Homotrimer. It depends on Mg(2+) as a cofactor.

Its subcellular location is the cytoplasm. It catalyses the reaction alpha-D-glucosamine 1-phosphate + acetyl-CoA = N-acetyl-alpha-D-glucosamine 1-phosphate + CoA + H(+). The catalysed reaction is N-acetyl-alpha-D-glucosamine 1-phosphate + UTP + H(+) = UDP-N-acetyl-alpha-D-glucosamine + diphosphate. Its pathway is nucleotide-sugar biosynthesis; UDP-N-acetyl-alpha-D-glucosamine biosynthesis; N-acetyl-alpha-D-glucosamine 1-phosphate from alpha-D-glucosamine 6-phosphate (route II): step 2/2. It functions in the pathway nucleotide-sugar biosynthesis; UDP-N-acetyl-alpha-D-glucosamine biosynthesis; UDP-N-acetyl-alpha-D-glucosamine from N-acetyl-alpha-D-glucosamine 1-phosphate: step 1/1. It participates in bacterial outer membrane biogenesis; LPS lipid A biosynthesis. In terms of biological role, catalyzes the last two sequential reactions in the de novo biosynthetic pathway for UDP-N-acetylglucosamine (UDP-GlcNAc). The C-terminal domain catalyzes the transfer of acetyl group from acetyl coenzyme A to glucosamine-1-phosphate (GlcN-1-P) to produce N-acetylglucosamine-1-phosphate (GlcNAc-1-P), which is converted into UDP-GlcNAc by the transfer of uridine 5-monophosphate (from uridine 5-triphosphate), a reaction catalyzed by the N-terminal domain. This is Bifunctional protein GlmU from Vesicomyosocius okutanii subsp. Calyptogena okutanii (strain HA).